The chain runs to 278 residues: Serine/arginine-rich splicing factor SR34B (278 aa).

In terms of domain architecture, RRM 1 spans 7-82 (RTIYVGNLPG…HHLRVELAHG (76 aa)). A compositionally biased stretch (basic and acidic residues) spans 81–91 (HGGRRSSHDAR). 2 disordered regions span residues 81–121 (HGGR…SEYR) and 192–263 (EYDS…RSLS). Residues 95–107 (SGRGRGGRGGGDG) show a composition bias toward gly residues. Basic and acidic residues-rich tracts occupy residues 108–120 (GGRERGPSRRSEY) and 192–201 (EYDSRRDSRS). Residues 120–195 (YRVVVSGLPS…EYVRVREYDS (76 aa)) enclose the RRM 2 domain. Residues Ser-201, Ser-203, Ser-225, Ser-231, Ser-233, Ser-242, Ser-250, Ser-259, and Ser-263 each carry the phosphoserine modification. The segment covering 207-243 (SYSKSRSRGRSPSRSRSRSRSRSKSRSPKAKSLRRSP) has biased composition (basic residues).

The protein belongs to the splicing factor SR family. SR subfamily. Component of the spliceosome.

The protein localises to the nucleus speckle. It localises to the nucleus. It is found in the nucleoplasm. Probably involved in intron recognition and spliceosome assembly. The sequence is that of Serine/arginine-rich splicing factor SR34B (SR34B) from Arabidopsis thaliana (Mouse-ear cress).